Reading from the N-terminus, the 451-residue chain is Chromosomal replication initiator protein DnaA (451 aa).

A domain I, interacts with DnaA modulators region spans residues 1-71; the sequence is MSEKEIWDKV…QAIIYDVIGY (71 aa). Positions 71–112 are domain II; sequence YEVKPHFISEDELASYNNVNTQEVQEPQVQHSSIDDKTWGKE. The interval 113 to 329 is domain III, AAA+ region; sequence QFNMHNTFDT…GALTRLLAYS (217 aa). Residues Gly157, Gly159, Lys160, and Thr161 each contribute to the ATP site. Positions 330–451 are domain IV, binds dsDNA; that stretch reads KLQGKPITTE…ENLEKEIRNQ (122 aa).

Belongs to the DnaA family. As to quaternary structure, oligomerizes as a right-handed, spiral filament on DNA at oriC.

The protein resides in the cytoplasm. Its function is as follows. Plays an essential role in the initiation and regulation of chromosomal replication. ATP-DnaA binds to the origin of replication (oriC) to initiate formation of the DNA replication initiation complex once per cell cycle. Binds the DnaA box (a 9 base pair repeat at the origin) and separates the double-stranded (ds)DNA. Forms a right-handed helical filament on oriC DNA; dsDNA binds to the exterior of the filament while single-stranded (ss)DNA is stabiized in the filament's interior. The ATP-DnaA-oriC complex binds and stabilizes one strand of the AT-rich DNA unwinding element (DUE), permitting loading of DNA polymerase. After initiation quickly degrades to an ADP-DnaA complex that is not apt for DNA replication. Binds acidic phospholipids. The protein is Chromosomal replication initiator protein DnaA of Staphylococcus epidermidis (strain ATCC 35984 / DSM 28319 / BCRC 17069 / CCUG 31568 / BM 3577 / RP62A).